A 332-amino-acid chain; its full sequence is Fructose-1,6-bisphosphatase class 1 (332 aa).

Mg(2+) contacts are provided by Glu-89, Asp-110, Leu-112, and Asp-113. Substrate-binding positions include 113–116 (DGSS), Asn-206, Tyr-239, 257–259 (YLY), and Lys-269. Position 275 (Glu-275) interacts with Mg(2+).

Belongs to the FBPase class 1 family. In terms of assembly, homotetramer. Requires Mg(2+) as cofactor.

The protein localises to the cytoplasm. The enzyme catalyses beta-D-fructose 1,6-bisphosphate + H2O = beta-D-fructose 6-phosphate + phosphate. It functions in the pathway carbohydrate biosynthesis; gluconeogenesis. The polypeptide is Fructose-1,6-bisphosphatase class 1 (Enterobacter sp. (strain 638)).